A 71-amino-acid chain; its full sequence is Small ribosomal subunit protein bS21 (71 aa).

Positions 50 to 59 (AAAVKRHAKK) are enriched in basic residues. The tract at residues 50–71 (AAAVKRHAKKVQREQRRAVRLY) is disordered. The segment covering 60–71 (VQREQRRAVRLY) has biased composition (basic and acidic residues).

Belongs to the bacterial ribosomal protein bS21 family.

In Pseudomonas entomophila (strain L48), this protein is Small ribosomal subunit protein bS21.